A 421-amino-acid chain; its full sequence is O-glycoside alpha-1,2-mannosyltransferase homolog 5 (421 aa).

The Nucleophile role is filled by Glu318.

Belongs to the glycosyltransferase 15 family.

Its subcellular location is the cytoplasm. Probable mannosyltransferase involved in O-glycosylation of cell wall and secreted proteins. The chain is O-glycoside alpha-1,2-mannosyltransferase homolog 5 (omh5) from Schizosaccharomyces pombe (strain 972 / ATCC 24843) (Fission yeast).